A 430-amino-acid chain; its full sequence is C4-dicarboxylate transport protein (430 aa).

9 helical membrane-spanning segments follow: residues 8–28, 44–64, 76–96, 144–164, 184–204, 222–242, 289–309, 326–346, and 352–372; these read SLYF…HFYP, LIKM…IAGM, IALL…LVIV, AFAS…GFAL, VIFG…FGAM, LIIC…GSIA, VVGL…SIYL, VIHQ…AAGV, and IVLA…LALI.

Belongs to the dicarboxylate/amino acid:cation symporter (DAACS) (TC 2.A.23) family.

It localises to the cell inner membrane. In terms of biological role, responsible for the transport of dicarboxylates such as succinate, fumarate, and malate from the periplasm across the membrane. The chain is C4-dicarboxylate transport protein from Yersinia enterocolitica serotype O:8 / biotype 1B (strain NCTC 13174 / 8081).